The sequence spans 155 residues: Vasotocin-neurophysin VT 1 (155 aa).

Residues methionine 1–alanine 20 form the signal peptide. Cysteines 21 and 26 form a disulfide. Glycine 29 is subject to Glycine amide. 7 disulfide bridges follow: cysteine 41/cysteine 85, cysteine 44/cysteine 58, cysteine 52/cysteine 75, cysteine 59/cysteine 65, cysteine 92/cysteine 105, cysteine 99/cysteine 117, and cysteine 106/cysteine 111.

It belongs to the vasopressin/oxytocin family. Seven disulfide bonds are present in neurophysin.

The protein localises to the secreted. Functionally, vasotocin is probably an antidiuretic hormone. The chain is Vasotocin-neurophysin VT 1 from Oncorhynchus masou (Cherry salmon).